The primary structure comprises 285 residues: Gas vesicle protein C2 (285 aa).

Repeat copies occupy residues 22 to 52, 53 to 84, 85 to 122, 123 to 155, 156 to 188, and 189 to 220. The 6 X approximate tandem repeats stretch occupies residues 22–220; it reads EAMDAYAEEF…ADDTTAQTDV (199 aa).

The protein belongs to the halobacterial gas vesicle GvpC family.

It is found in the gas vesicle. In terms of biological role, confers stability, involved in shaping gas vesicles (GV), hollow, gas filled proteinaceous nanostructures. GVs allow positioning of halobacteria at an optimal depth for growth in the poorly aerated, shallow brine pools of their habitat. Its function is as follows. Expression of 2 c-vac DNA fragments containing 2 divergently transcribed regions (gvpE-gvpF-gvpG-gvpH-gvpI-gvpJ-gvpK-gvpL-gvpM and gvpA-gvpC-gvpN-gvpO) allows H.volcanii to produce gas vesicles. This is Gas vesicle protein C2 from Halobacterium salinarum (strain ATCC 700922 / JCM 11081 / NRC-1) (Halobacterium halobium).